The primary structure comprises 128 residues: Large ribosomal subunit protein bL12 (128 aa).

This sequence belongs to the bacterial ribosomal protein bL12 family. As to quaternary structure, homodimer. Part of the ribosomal stalk of the 50S ribosomal subunit. Forms a multimeric L10(L12)X complex, where L10 forms an elongated spine to which 2 to 4 L12 dimers bind in a sequential fashion. Binds GTP-bound translation factors.

Its function is as follows. Forms part of the ribosomal stalk which helps the ribosome interact with GTP-bound translation factors. Is thus essential for accurate translation. This chain is Large ribosomal subunit protein bL12, found in Kosmotoga olearia (strain ATCC BAA-1733 / DSM 21960 / TBF 19.5.1).